Here is a 714-residue protein sequence, read N- to C-terminus: Elongation factor G-like protein (714 aa).

The tr-type G domain occupies 21 to 289; sequence GGVRNVVLVG…VATRGFPSPM (269 aa). Positions 30–37 are G1; sequence GPSGGGKT. A GTP-binding site is contributed by 30–37; that stretch reads GPSGGGKT. The G2 stretch occupies residues 73-77; that stretch reads QRSVG. The tract at residues 94–97 is G3; sequence DTPG. Residues 94 to 98 and 148 to 151 each bind GTP; these read DTPGY and TKLD. The segment at 148 to 151 is G4; the sequence is TKLD. A G5 region spans residues 267–269; it reads CSS.

Belongs to the TRAFAC class translation factor GTPase superfamily. Classic translation factor GTPase family. EF-G/EF-2 subfamily.

This Mycobacterium tuberculosis (strain CDC 1551 / Oshkosh) protein is Elongation factor G-like protein.